A 130-amino-acid chain; its full sequence is Small ribosomal subunit protein uS9 (130 aa).

This sequence belongs to the universal ribosomal protein uS9 family.

The protein is Small ribosomal subunit protein uS9 of Histophilus somni (strain 129Pt) (Haemophilus somnus).